The chain runs to 75 residues: MAVEKFETALKKLEDVVKKLEGGELSLEESLKAFEEGVKFSAFCSKKLNEAERRVETLVKQRDGSFVTKPFEGEE.

It belongs to the XseB family. In terms of assembly, heterooligomer composed of large and small subunits.

Its subcellular location is the cytoplasm. It catalyses the reaction Exonucleolytic cleavage in either 5'- to 3'- or 3'- to 5'-direction to yield nucleoside 5'-phosphates.. Its function is as follows. Bidirectionally degrades single-stranded DNA into large acid-insoluble oligonucleotides, which are then degraded further into small acid-soluble oligonucleotides. In Geobacter sp. (strain M21), this protein is Exodeoxyribonuclease 7 small subunit.